Here is a 405-residue protein sequence, read N- to C-terminus: Lipase lipl-1 (405 aa).

Positions 1 to 20 (MRSWSTVMLAVLATAATVFG) are cleaved as a signal peptide. The N-linked (GlcNAc...) asparagine glycan is linked to asparagine 66. Residue serine 169 is the Nucleophile of the active site. Asparagine 273 is a glycosylation site (N-linked (GlcNAc...) asparagine). Active-site charge relay system residues include aspartate 344 and histidine 376.

This sequence belongs to the AB hydrolase superfamily. Lipase family.

It localises to the secreted. Its subcellular location is the lysosome lumen. Functionally, lipase that, together with lipl-3, plays a role in the response to nutrient deprivation by controlling lipid metabolism. Specifically, involved in the breakdown of lipids during lipophagy, a process during which lipids contained in lipid droplets that have been delivered to lysosomes by autophagy are degraded. The chain is Lipase lipl-1 from Caenorhabditis elegans.